The sequence spans 70 residues: Toxin Boma6d (70 aa).

The LCN-type CS-alpha/beta domain maps to 2–68; that stretch reads RDAYIAQNYN…VPIKVEGKCH (67 aa). 4 disulfide bridges follow: cysteine 12–cysteine 67, cysteine 16–cysteine 40, cysteine 22–cysteine 50, and cysteine 26–cysteine 52.

The protein belongs to the long (4 C-C) scorpion toxin superfamily. Sodium channel inhibitor family. Alpha subfamily. Expressed by the venom gland.

It is found in the secreted. Its function is as follows. Alpha toxins bind voltage-independently at site-3 of sodium channels (Nav) and inhibit the inactivation of the activated channels, thereby blocking neuronal transmission. This Buthus occitanus mardochei (Moroccan scorpion) protein is Toxin Boma6d.